The primary structure comprises 360 residues: S-adenosylmethionine decarboxylase proenzyme (360 aa).

Residues E13 and E16 contribute to the active site. S73 acts as the Schiff-base intermediate with substrate; via pyruvic acid in catalysis. S73 carries the pyruvic acid (Ser); by autocatalysis modification. C87 functions as the Proton donor; for catalytic activity in the catalytic mechanism. Catalysis depends on proton acceptor; for processing activity residues S236 and H249.

The protein belongs to the eukaryotic AdoMetDC family. It depends on pyruvate as a cofactor. Post-translationally, is synthesized initially as an inactive proenzyme. Formation of the active enzyme involves a self-maturation process in which the active site pyruvoyl group is generated from an internal serine residue via an autocatalytic post-translational modification. Two non-identical subunits are generated from the proenzyme in this reaction, and the pyruvate is formed at the N-terminus of the alpha chain, which is derived from the carboxyl end of the proenzyme. The post-translation cleavage follows an unusual pathway, termed non-hydrolytic serinolysis, in which the side chain hydroxyl group of the serine supplies its oxygen atom to form the C-terminus of the beta chain, while the remainder of the serine residue undergoes an oxidative deamination to produce ammonia and the pyruvoyl group blocking the N-terminus of the alpha chain. As to expression, stolon, also expressed in leaves, stems and roots.

It carries out the reaction S-adenosyl-L-methionine + H(+) = S-adenosyl 3-(methylsulfanyl)propylamine + CO2. Its pathway is amine and polyamine biosynthesis; S-adenosylmethioninamine biosynthesis; S-adenosylmethioninamine from S-adenosyl-L-methionine: step 1/1. This is S-adenosylmethionine decarboxylase proenzyme (SAMDC) from Solanum tuberosum (Potato).